The sequence spans 56 residues: Large ribosomal subunit protein eL37 (56 aa).

Zn(2+)-binding residues include Cys19, Cys22, Cys34, and Cys37. The C4-type zinc-finger motif lies at 19–37 (CRRCGSVSLNVHTKQCTSC).

The protein belongs to the eukaryotic ribosomal protein eL37 family. Zn(2+) serves as cofactor.

Functionally, binds to the 23S rRNA. In Methanosarcina mazei (strain ATCC BAA-159 / DSM 3647 / Goe1 / Go1 / JCM 11833 / OCM 88) (Methanosarcina frisia), this protein is Large ribosomal subunit protein eL37.